The chain runs to 561 residues: Urocanate hydratase (561 aa).

NAD(+) contacts are provided by residues 52–53, Q130, 176–178, E196, R201, 242–243, 263–267, 273–274, and Y322; these read GG, GMG, NA, QTSAH, and YL. C410 is a catalytic residue. Position 492 (G492) interacts with NAD(+).

Belongs to the urocanase family. It depends on NAD(+) as a cofactor.

It localises to the cytoplasm. The enzyme catalyses 4-imidazolone-5-propanoate = trans-urocanate + H2O. It functions in the pathway amino-acid degradation; L-histidine degradation into L-glutamate; N-formimidoyl-L-glutamate from L-histidine: step 2/3. Functionally, catalyzes the conversion of urocanate to 4-imidazolone-5-propionate. This chain is Urocanate hydratase, found in Enterobacter sp. (strain 638).